The following is a 338-amino-acid chain: Lumican (338 aa).

The signal sequence occupies residues 1–18; sequence MSLSAFTLFLALIGGTSG. Pyrrolidone carboxylic acid is present on Gln-19. Sulfotyrosine is present on residues Tyr-20, Tyr-21, Tyr-23, and Tyr-30. An LRRNT domain is found at 28-66; the sequence is SIYGQSSPNCAPECNCPESYPSAMYCDELKLKSVPMVPP. 10 LRR repeats span residues 67-88, 91-114, 117-137, 138-159, 160-181, 185-205, 206-227, 230-253, 255-276, and 277-296; these read GIKYLYLRNNQIDHIDEKAFEN, DLQWLILDHNLLENSKIKGRVFSK, QLKKLHINHNNLTESVGPLPK, SLEDLQLTHNKITKLGSFEGLV, NLTFIHLQHNRLKEDAVSAAFK, SLEYLDLSFNQIARLPSGLPV, SLLTLYLDNNKISNIPDEYFKR, ALQYLRLSHNELADSGIPGNSFNV, SLVELDLSYNKLKNIPTVNENL, and ENYYLEVNQLEKFDIKSFCK. An N-linked (GlcNAc...) (keratan sulfate) asparagine glycan is attached at Asn-88. Asn-127 carries N-linked (GlcNAc...) (keratan sulfate) asparagine glycosylation. Asn-160 is a glycosylation site (N-linked (GlcNAc...) (keratan sulfate) asparagine). N-linked (GlcNAc...) (keratan sulfate) asparagine glycosylation is present at Asn-252. Cys-295 and Cys-328 are joined by a disulfide. Position 304 is a phosphoserine (Ser-304). One copy of the LRR 11 repeat lies at 305 to 326; the sequence is KIKHLRLDGNRISETSLPPDMY.

Belongs to the small leucine-rich proteoglycan (SLRP) family. SLRP class II subfamily. Binds to laminin. Sulfated on tyrosine residue(s). In terms of processing, contains keratan sulfate. Cornea and other tissues.

The protein localises to the secreted. It is found in the extracellular space. The protein resides in the extracellular matrix. The polypeptide is Lumican (LUM) (Homo sapiens (Human)).